Here is a 228-residue protein sequence, read N- to C-terminus: Lipoprotein LpqN (228 aa).

Residues 1-19 form the signal peptide; the sequence is MKHFTAAVATVALSLALAG. The N-palmitoyl cysteine moiety is linked to residue Cys20. Cys20 carries S-diacylglycerol cysteine lipidation. Residues 26 to 53 are disordered; sequence TDSAPTTSPTTTSPTTSTTTTSATTSAQ. The span at 28-52 shows a compositional bias: low complexity; it reads SAPTTSPTTTSPTTSTTTTSATTSA.

In terms of assembly, interacts with the periplasmic loop domains of the mycolate transporters MmpL3 and MmpL11. Also interacts with secreted cell envelope biosynthetic enzymes such as Ag85A. These interactions are weak and may require a putative mycobacterial adapter protein or molecule. Interacts with human ubiquitin ligase CBL.

Its subcellular location is the cell membrane. The protein localises to the secreted. In terms of biological role, involved in cell envelope biogenesis. May act as a membrane fusion protein, connecting MmpL transporters with periplasmic proteins, and play a role in cell envelope lipid changes during biofilm maturation. Its function is as follows. Is also a virulence factor required for intracellular survival. Associates with CBL, a host ubiquitin ligase, and probably blocks the normal functions of CBL and disturbs CBL-mediated antibacterial activity. Interaction counteracts antibacterial defense but causes a reciprocal enhancement of antiviral defense. The polypeptide is Lipoprotein LpqN (Mycobacterium tuberculosis (strain ATCC 25618 / H37Rv)).